The primary structure comprises 315 residues: Aspartate carbamoyltransferase catalytic subunit (315 aa).

Carbamoyl phosphate contacts are provided by Arg-65 and Thr-66. Lys-93 is a binding site for L-aspartate. Carbamoyl phosphate contacts are provided by Arg-115, His-143, and Gln-146. The L-aspartate site is built by Arg-176 and Arg-231. The carbamoyl phosphate site is built by Gly-272 and Pro-273.

It belongs to the aspartate/ornithine carbamoyltransferase superfamily. ATCase family. Heterododecamer (2C3:3R2) of six catalytic PyrB chains organized as two trimers (C3), and six regulatory PyrI chains organized as three dimers (R2).

It carries out the reaction carbamoyl phosphate + L-aspartate = N-carbamoyl-L-aspartate + phosphate + H(+). It participates in pyrimidine metabolism; UMP biosynthesis via de novo pathway; (S)-dihydroorotate from bicarbonate: step 2/3. Catalyzes the condensation of carbamoyl phosphate and aspartate to form carbamoyl aspartate and inorganic phosphate, the committed step in the de novo pyrimidine nucleotide biosynthesis pathway. This chain is Aspartate carbamoyltransferase catalytic subunit, found in Hyphomonas neptunium (strain ATCC 15444).